The following is a 177-amino-acid chain: Large ribosomal subunit protein uL10 (177 aa).

It belongs to the universal ribosomal protein uL10 family. As to quaternary structure, part of the ribosomal stalk of the 50S ribosomal subunit. The N-terminus interacts with L11 and the large rRNA to form the base of the stalk. The C-terminus forms an elongated spine to which L12 dimers bind in a sequential fashion forming a multimeric L10(L12)X complex.

Functionally, forms part of the ribosomal stalk, playing a central role in the interaction of the ribosome with GTP-bound translation factors. The protein is Large ribosomal subunit protein uL10 of Leptospira interrogans serogroup Icterohaemorrhagiae serovar copenhageni (strain Fiocruz L1-130).